The following is a 354-amino-acid chain: Uroporphyrinogen decarboxylase (354 aa).

Substrate-binding positions include 28 to 32 (RQAGR), D78, Y155, S210, and H325.

Belongs to the uroporphyrinogen decarboxylase family. Homodimer.

It localises to the cytoplasm. The catalysed reaction is uroporphyrinogen III + 4 H(+) = coproporphyrinogen III + 4 CO2. It participates in porphyrin-containing compound metabolism; protoporphyrin-IX biosynthesis; coproporphyrinogen-III from 5-aminolevulinate: step 4/4. Catalyzes the decarboxylation of four acetate groups of uroporphyrinogen-III to yield coproporphyrinogen-III. This is Uroporphyrinogen decarboxylase from Trichodesmium erythraeum (strain IMS101).